The chain runs to 204 residues: Translation initiation factor 2 subunit beta (204 aa).

A TRAM domain is found at 146 to 204; it reads NLEEGQVLDVEIQSLSKRGDGVVKMGRYIMYVSNAKPGQSVKIKISRISGSIVFTERAE.

This sequence belongs to the eIF-2-beta/eIF-5 family. Heterotrimer composed of an alpha, a beta and a gamma chain.

EIF-2 functions in the early steps of protein synthesis by forming a ternary complex with GTP and initiator tRNA. The chain is Translation initiation factor 2 subunit beta from Methanoregula boonei (strain DSM 21154 / JCM 14090 / 6A8).